Here is a 232-residue protein sequence, read N- to C-terminus: 7-cyano-7-deazaguanine synthase (232 aa).

8–18 (FSGGQDSTTCL) contacts ATP. Cys-188, Cys-197, Cys-200, and Cys-203 together coordinate Zn(2+).

Belongs to the QueC family. Zn(2+) serves as cofactor.

It carries out the reaction 7-carboxy-7-deazaguanine + NH4(+) + ATP = 7-cyano-7-deazaguanine + ADP + phosphate + H2O + H(+). It participates in purine metabolism; 7-cyano-7-deazaguanine biosynthesis. Its function is as follows. Catalyzes the ATP-dependent conversion of 7-carboxy-7-deazaguanine (CDG) to 7-cyano-7-deazaguanine (preQ(0)). The polypeptide is 7-cyano-7-deazaguanine synthase (Buchnera aphidicola subsp. Schizaphis graminum (strain Sg)).